Consider the following 392-residue polypeptide: Selenide, water dikinase 1 (392 aa).

An N-acetylserine modification is found at Ser2. Cys31 is a catalytic residue. ATP contacts are provided by residues Lys32, 67-69, Asp87, Asp110, and 161-164; these read GMD and GGQT. A Mg(2+)-binding site is contributed by Asp69. Asp110 is a binding site for Mg(2+). Asp265 is a binding site for Mg(2+).

This sequence belongs to the selenophosphate synthase 1 family. Class II subfamily. In terms of assembly, homodimer. Heterodimer with isoform 3. As to quaternary structure, homodimer. Heterodimer with isoform 4. Homodimer. Heterodimer with isoform 1. In terms of assembly, homodimer. Heterodimer with isoform 2. Mg(2+) serves as cofactor. Gradually expressed during the cell cycle until G2/M phase and then decreases. As to expression, gradually expressed during the cell cycle until S phase and then decreases.

The protein resides in the cell membrane. It is found in the nucleus membrane. The protein localises to the cytoplasm. The enzyme catalyses hydrogenselenide + ATP + H2O = selenophosphate + AMP + phosphate + 2 H(+). With respect to regulation, activated by phosphate ions and by potassium ions. Its function is as follows. Synthesizes selenophosphate from selenide and ATP. In Homo sapiens (Human), this protein is Selenide, water dikinase 1 (SEPHS1).